A 590-amino-acid polypeptide reads, in one-letter code: Melanophilin (590 aa).

The region spanning 4 to 124 (RLDLSTLTDE…IGSLEWYYQH (121 aa)) is the RabBD domain. The FYVE-type zinc finger occupies 64–107 (CARCLQPYRLLLNSRRQCLECSLFVCKSCSHAHPEEQGWLCDPC). Disordered stretches follow at residues 147–182 (GGGGSEPSLEEGNGDSEQTDEDGDLDTEARDQPLNS), 215–276 (SVPE…AELD), 311–335 (DTSDEDSIQGPRAASQHSKRRARTV), 361–472 (VLPP…SEIS), and 485–590 (GLTV…AQQP). Positions 154 to 172 (SLEEGNGDSEQTDEDGDLD) are enriched in acidic residues. The span at 215-238 (SVPESAHSLQSLSGEPYSEDTTSL) shows a compositional bias: polar residues. Residues 339 to 485 (QILELNKRMS…SRIAALRAAG (147 aa)) adopt a coiled-coil conformation. Residues 391-401 (LTSNISGSSTS) show a composition bias toward low complexity. Over residues 424–433 (GHMETQERNP) the composition is skewed to basic and acidic residues.

In terms of assembly, binds RAB27A that has been activated by GTP-binding via its N-terminus. Binds MYO5A via its C-terminal coiled coil domain. As to expression, highly expressed in embryos at day 7; not detectable at day 11. Highly expressed in adult stomach; detected at lower levels in kidney, lung, skin and small intestine. Detected in melanocytes.

It localises to the melanosome. Rab effector protein involved in melanosome transport. Serves as link between melanosome-bound RAB27A and the motor protein MYO5A. The protein is Melanophilin (Mlph) of Mus musculus (Mouse).